The sequence spans 3930 residues: Hybrid PKS-NRPS synthetase apdA (3930 aa).

Residues 2-440 (QDLIAIVGSA…GTNAHAIIEG (439 aa)) form the Ketosynthase family 3 (KS3) domain. Active-site for beta-ketoacyl synthase activity residues include C176, H313, and H361. The malonyl-CoA:ACP transacylase (MAT) domain stretch occupies residues 557-879 (IFTGQGAQWA…MRRGDNEIEA (323 aa)). The tract at residues 948 to 1085 (HELLGRRVPD…GRLIINYGDP (138 aa)) is N-terminal hotdog fold. The interval 948-1251 (HELLGRRVPD…SMKSMSEPQP (304 aa)) is dehydratase (DH) domain. The 305-residue stretch at 948-1252 (HELLGRRVPD…MKSMSEPQPE (305 aa)) folds into the PKS/mFAS DH domain. Residue H980 is the Proton acceptor; for dehydratase activity of the active site. The tract at residues 1100-1252 (NVPVDMGRFY…MKSMSEPQPE (153 aa)) is C-terminal hotdog fold. Catalysis depends on D1159, which acts as the Proton donor; for dehydratase activity. The interval 1389 to 1588 (QDDMLNRFYM…FSGLDCLAPD (200 aa)) is methyltransferase (MT) domain. The tract at residues 2088–2229 (ATYLLAGMTG…SLASIIGNAA (142 aa)) is ketoreductase (KR) domain. The Carrier 1 domain maps to 2326–2403 (AVIPIVQEAF…QICEDAVRQF (78 aa)). Position 2363 is an O-(pantetheine 4'-phosphoryl)serine (S2363). 2 disordered regions span residues 2414–2433 (VAPN…SNAT) and 2444–2494 (DAAN…VDAD). Residues 2445 to 2473 (AANGDYESSSQGDDSRGNSSSSSSHTSPS) are compositionally biased toward low complexity. A condensation (C) domain region spans residues 2509–2937 (PASFAQSRLW…SLPVNQLPVT (429 aa)). The segment at 2971 to 3371 (KSFPEETAIK…GTLIFMGRMD (401 aa)) is adenylation (A) (KR) domain. The interval 2971–3371 (KSFPEETAIK…GTLIFMGRMD (401 aa)) is reductase (RED) domain. Residues 3493–3572 (RHLSLAEGEL…QMARRISRRK (80 aa)) form the Carrier 2 domain. An O-(pantetheine 4'-phosphoryl)serine modification is found at S3532.

This sequence in the C-terminal section; belongs to the NRP synthetase family.

It participates in secondary metabolite biosynthesis. Functionally, hybrid PKS-NRPS synthetase; part of the gene cluster that mediates the biosynthesis of aspyridones. The polyketide-amino acid backbone preaspyridone A is first assembled by the PKS-NRPS hybrid apdA. The assembly of preaspyridone A is initiated by loading of malonyl-CoA onto apdA, followed by decarboxylation to yield the acetyl starter unit. The growing polyketide chain then elongates into a tetraketide. The adpA PKS module catalyzes three Claisen condensations, as well as beta-keto processing and methylation. Alpha-methylation step during polyketide synthesis is a prerequisite and a key checkpoint for chain transfer between PKS and NRPS modules. The downstream NRPS module contains the condensation (C), adenylation (A), and thiolation (T) domains and catalyzes the incorporation of tyrosine via the formation of the L-tyrosinyl-thioester and the amide linkage between L-tyrosinyl-thioester and the tetraketide. The bimodular assembly line is terminated with a reductase (R) domain that facilitates formation and release of the tetramic acid product. Because apdA lacks a designated enoylreductase (ER) domain, the required activity is provided the enoyl reductase apdC. ApdC appears to operate with different stereoselectivity in different PKS cycle. Combined with apdC, apdA is proposed to synthesize preaspyridone A via about 20 enzymatic steps. A number of oxidative steps performed successively by the cytochrome P450 monooxygenases apdE and apdB are required for the conversion of preaspyridone A to aspyridone A. The cytochrome P450 monooxygenase apdE is responsible for the oxidative dephenylation of preaspyridone A. Finally, the predicted FAD-dependent monooxygenase apdD and the acyl-CoA dehydrogenase apdG may be involved in the transformation of aspyridone A into aspyridone B. This chain is Hybrid PKS-NRPS synthetase apdA, found in Emericella nidulans (strain FGSC A4 / ATCC 38163 / CBS 112.46 / NRRL 194 / M139) (Aspergillus nidulans).